We begin with the raw amino-acid sequence, 101 residues long: Cilia- and flagella-associated protein 141 (101 aa).

Microtubule inner protein component of sperm flagellar doublet microtubules. Expressed in trachea multiciliated cells.

It localises to the cytoplasm. The protein resides in the cytoskeleton. Its subcellular location is the cilium axoneme. The protein localises to the flagellum axoneme. Microtubule inner protein (MIP) part of the dynein-decorated doublet microtubules (DMTs) in cilia axoneme, which is required for motile cilia beating. This chain is Cilia- and flagella-associated protein 141, found in Bos taurus (Bovine).